The chain runs to 394 residues: Gastricsin (394 aa).

A signal peptide spans 1 to 16 (MKWMVVVLLCLPLLEA). The propeptide at 17–65 (TQIKVPLKKIKSIREVLREKGLLGDFLKNHKPQHARKFFRNRLAKTGDF) is activation peptide. Residues 79-391 (YFGQISLGTP…DLANNRVGFA (313 aa)) enclose the Peptidase A1 domain. The active site involves aspartate 97. Intrachain disulfides connect cysteine 110-cysteine 115 and cysteine 273-cysteine 277. Threonine 283 is an active-site residue. A disulfide bridge links cysteine 316 with cysteine 349.

The protein belongs to the peptidase A1 family.

The protein localises to the secreted. It catalyses the reaction More restricted specificity than pepsin A, but shows preferential cleavage at Tyr-|-Xaa bonds. High activity on hemoglobin.. Functionally, hydrolyzes a variety of proteins. The chain is Gastricsin (PGC) from Cavia porcellus (Guinea pig).